The primary structure comprises 321 residues: MSAGKYLLGTAALVGGVYYYDQYVQPILPRQQHQELAYQTQRVENKGSELNNKLTKKIEEGKKFVNEKTESVTKQVKNSDVYQKLQLNTEDYKKHVEDAVDNDKNVFVVGIQKYIDFVNQLGEVKVQTGTTQYSTVSPNVEVKEKSIFGNWFDKSDNKVDQLKNDADKKINEAKDKAESTKSDFFNWNSKKADELDKKANEAINWTNKQIDYASAEWHKHYEQAKGDWNKALDDLSKQWNDSKKQLNGRFDTEKDRAIKGVEDAKSNFEKLSNDLANDASKNQKLKDAQDHFGKSLENLKLFGDDVYNDFAKRFDDLFNRK.

It is found in the secreted. The protein resides in the cell wall. The polypeptide is 37 kDa cell surface protein (CSP37) (Candida albicans (Yeast)).